The sequence spans 417 residues: NADH-quinone oxidoreductase subunit D (417 aa).

It belongs to the complex I 49 kDa subunit family. NDH-1 is composed of 14 different subunits. Subunits NuoB, C, D, E, F, and G constitute the peripheral sector of the complex.

The protein localises to the cell inner membrane. It catalyses the reaction a quinone + NADH + 5 H(+)(in) = a quinol + NAD(+) + 4 H(+)(out). Its function is as follows. NDH-1 shuttles electrons from NADH, via FMN and iron-sulfur (Fe-S) centers, to quinones in the respiratory chain. The immediate electron acceptor for the enzyme in this species is believed to be ubiquinone. Couples the redox reaction to proton translocation (for every two electrons transferred, four hydrogen ions are translocated across the cytoplasmic membrane), and thus conserves the redox energy in a proton gradient. This is NADH-quinone oxidoreductase subunit D from Acidithiobacillus ferrooxidans (strain ATCC 53993 / BNL-5-31) (Leptospirillum ferrooxidans (ATCC 53993)).